The sequence spans 503 residues: Maturase K (503 aa).

Belongs to the intron maturase 2 family. MatK subfamily.

It localises to the plastid. It is found in the chloroplast. Its function is as follows. Usually encoded in the trnK tRNA gene intron. Probably assists in splicing its own and other chloroplast group II introns. The chain is Maturase K from Rosa californica (California wild rose).